Here is a 341-residue protein sequence, read N- to C-terminus: Ferredoxin--NADP reductase 2 (341 aa).

The FAD site is built by Asp42, Gln50, Tyr55, Ile95, Phe129, Asp294, and Ser335.

The protein belongs to the ferredoxin--NADP reductase type 2 family. In terms of assembly, homodimer. Requires FAD as cofactor.

The catalysed reaction is 2 reduced [2Fe-2S]-[ferredoxin] + NADP(+) + H(+) = 2 oxidized [2Fe-2S]-[ferredoxin] + NADPH. The protein is Ferredoxin--NADP reductase 2 of Chloroherpeton thalassium (strain ATCC 35110 / GB-78).